The chain runs to 196 residues: MAPPNKNPNGYYVESFPAPGLRQIVRHITGLNKQGESVFLHSDHGDHHRFMVQNQAISNLLYSTQETPVDLNNNIDIQKAKEKEPPFHYKSGSIVRMIDFGPGVESPLHRAMTIDYGIIVEGVFELILDSGEKRIMRQGDVSVQRATAHKWVNVTGNGTLPGRVMWVLLDCKEVVDAKGEKVEGYLGSLQEHYEGR.

A cupin-like domain region spans residues 99 to 165 (DFGPGVESPL…GNGTLPGRVM (67 aa)).

It belongs to the virC family.

Highly reducing polyketide synthase; part of the gene cluster that mediates the biosynthesis of sordarial, a salicylic aldehyde structurally related to the phytotoxin pyriculol. The most interesting aspect of this pathway is formation of an aromatic product from the highly reducing polyketide synthase srdA. SrdA synthesizes a reduced polyketide chain from one molecule of acetyl-CoA and five molecules of malonyl-CoA. The polyketide chain is then reductively released as an aldehyde. The oxidoreductases srdC, srdD and srdE then oxidize one of the hydroxy groups to facilitate the intramolecular aldol condensation, followed by dehydration to yield a salicylic aldehyde. This aldehyde can undergo facile reduction by endogenous reductases to yield the alcohol 1-hydroxy-2-hydroxymethyl-3-pent-1,3-dienylbenzene. The flavin-dependent srdI counteract against the propensity of the aldehydes to be reduced under physiological conditions and is responsible for reoxidizing 1-hydroxy-2-hydroxymethyl-3-pent-1,3-dienylbenzene back to the salicylic aldehyde. This salicylic aldehyde is then selectively epoxidized by the cupin-domain-containing oxidoreductase srdB to yield the epoxide, which can be hydrolyzed stereoselectively by the hydrolase srdG to give the final product sordarial. In Neurospora crassa (strain ATCC 24698 / 74-OR23-1A / CBS 708.71 / DSM 1257 / FGSC 987), this protein is Cupin-domain-containing oxidoreductase srdD.